The primary structure comprises 778 residues: Aconitate hydratase, mitochondrial (778 aa).

The transit peptide at 1 to 16 directs the protein to the mitochondrion; sequence MLSARSAIKRPIVRGL. Residues glutamine 95 and 188 to 190 each bind substrate; that span reads DSH. Residue cysteine 382 participates in [4Fe-4S] cluster binding. Serine 391 is subject to Phosphoserine. Phosphothreonine is present on threonine 409. [4Fe-4S] cluster contacts are provided by cysteine 445 and cysteine 448. Substrate is bound by residues arginine 471 and arginine 476. Phosphoserine is present on serine 556. Residues arginine 604 and 667-668 contribute to the substrate site; that span reads SR.

The protein belongs to the aconitase/IPM isomerase family. Monomer. Binds to mitochondrial DNA (mtDNA) and identified as component of mitochondrial nucleoids. [4Fe-4S] cluster is required as a cofactor.

It is found in the mitochondrion. It localises to the cytoplasm. It catalyses the reaction citrate = D-threo-isocitrate. The protein operates within carbohydrate metabolism; tricarboxylic acid cycle; isocitrate from oxaloacetate: step 2/2. Subject to catabolite regulation. Its function is as follows. Catalyzes the isomerization of citrate to isocitrate via cis-aconitate, a step in the citric acid cycle. Can also provide minor contributions to the reversible dehydration of (R)-homocitrate to cis-homoaconitate, a step in the alpha-aminoadipate pathway for lysine biosynthesis. Also plays an essential role in mtDNA maintenance. May directly protect mtDNA from accumulation of point mutations and ssDNA breaks as a component of mitochondrial nucleoids, or by preventing accumulation of iron citrate thereby alleviating its detrimental effects in mitochondria. This chain is Aconitate hydratase, mitochondrial, found in Saccharomyces cerevisiae (strain ATCC 204508 / S288c) (Baker's yeast).